The sequence spans 174 residues: Gamma-crystallin S (174 aa).

2 Beta/gamma crystallin 'Greek key' domains span residues glycine 2 to serine 40 and glycine 41 to histidine 83. The segment at phenylalanine 84 to glutamate 89 is connecting peptide. Beta/gamma crystallin 'Greek key' domains lie at tyrosine 90–aspartate 130 and glycine 131–methionine 173.

The protein belongs to the beta/gamma-crystallin family.

In terms of biological role, crystallins are the dominant structural components of the vertebrate eye lens. This Cyprinus carpio (Common carp) protein is Gamma-crystallin S (crygs).